A 262-amino-acid chain; its full sequence is Ribosomal RNA small subunit methyltransferase A (262 aa).

Residues H16, L18, G43, E64, D89, and N109 each coordinate S-adenosyl-L-methionine.

This sequence belongs to the class I-like SAM-binding methyltransferase superfamily. rRNA adenine N(6)-methyltransferase family. RsmA subfamily.

It localises to the cytoplasm. It carries out the reaction adenosine(1518)/adenosine(1519) in 16S rRNA + 4 S-adenosyl-L-methionine = N(6)-dimethyladenosine(1518)/N(6)-dimethyladenosine(1519) in 16S rRNA + 4 S-adenosyl-L-homocysteine + 4 H(+). In terms of biological role, specifically dimethylates two adjacent adenosines (A1518 and A1519) in the loop of a conserved hairpin near the 3'-end of 16S rRNA in the 30S particle. May play a critical role in biogenesis of 30S subunits. This chain is Ribosomal RNA small subunit methyltransferase A, found in Xanthomonas campestris pv. campestris (strain B100).